The primary structure comprises 361 residues: 45 kDa calcium-binding protein (361 aa).

A signal peptide spans 1–35 (MVWLVAMTPRQSSLCGLAAHGLWFLGLVLLMDATA). N-linked (GlcNAc...) asparagine glycosylation is present at Asn-39. EF-hand domains follow at residues 97–132 (RSRRKLMVIFSKVDVNTDRRISAKEMQHWIMEKTAE) and 136–171 (EAVKENKLHFRAVDPDGDGHVSWDEYKVKFLASKGH). At Ser-98 the chain carries Phosphoserine. Ca(2+)-binding residues include Asp-110, Asn-112, Asp-114, Arg-116, Glu-121, Asp-149, Asp-151, Asp-153, His-155, and Glu-160. A Phosphothreonine modification is found at Thr-192. 4 consecutive EF-hand domains span residues 196–231 (LGNLRDRWYQADNPPADLLLTEDEFLSFLHPEHSRG), 232–267 (MLKFMVKEIFRDLDQDGDKQLSLPEFISLPVGTVEN), 277–312 (WVKDRKKEFEELIDSNHDGIVTMEELENYMDPMNEY), and 313–348 (NALNEAKQMIAIADENQNHHLEPEEILKYSEFFTGS). Asp-212 is a Ca(2+) binding site. Thr-216 bears the Phosphothreonine mark. Ca(2+) contacts are provided by Glu-219, Asp-245, Asp-247, Asp-249, Gln-251, and Glu-256. Thr-264 bears the Phosphothreonine mark. Ca(2+) contacts are provided by Asp-290, Asn-292, and Asp-294. Thr-298 carries the post-translational modification Phosphothreonine. Positions 301, 326, 328, 330, 332, and 337 each coordinate Ca(2+). The segment at 308-361 (PMNEYNALNEAKQMIAIADENQNHHLEPEEILKYSEFFTGSKLMDYARNVHEEF) is necessary for intracellular retention in Golgi apparatus lumen.

It belongs to the CREC family. Ubiquitous.

It is found in the golgi apparatus lumen. Its function is as follows. May regulate calcium-dependent activities in the endoplasmic reticulum lumen or post-ER compartment. In Mus musculus (Mouse), this protein is 45 kDa calcium-binding protein (Sdf4).